A 366-amino-acid polypeptide reads, in one-letter code: Outer membrane porin C 2 (366 aa).

The first 21 residues, 1-21 (MKLKIVAVVVTGLLAANVAHA), serve as a signal peptide directing secretion.

It belongs to the Gram-negative porin family. As to quaternary structure, homotrimer. Forms mixed heterotrimers with OmpF and with PhoE; other mixed heterotrimers are also probable.

It is found in the cell outer membrane. Its function is as follows. Forms pores that allow passive diffusion of small molecules across the outer membrane. Plays a role in virulence. The protein is Outer membrane porin C 2 of Shigella flexneri serotype 5a (strain M90T).